The chain runs to 385 residues: AA13 family lytic polysaccharide monooxygenase aasA (385 aa).

Residues 1–18 (MKSLLALVAGNLVTAVSG) form the signal peptide. H19 contributes to the Cu(2+) binding site. H19 carries the methylhistidine modification. Residues 19 to 248 (HGYLTVPASR…AQVYLHCADI (230 aa)) form an N-terminal catalytic module region. Cystine bridges form between C40–C43, C66–C245, C102–C203, C118–C145, C153–C161, C167–C173, and C181–C192. H109 is a Cu(2+) binding site. N120 is a glycosylation site (N-linked (GlcNAc...) asparagine). Y242 provides a ligand contact to Cu(2+). A disordered region spans residues 254–276 (SGSSPSPTSTTSTATSTTTPSST). Over residues 256–276 (SSPSPTSTTSTATSTTTPSST) the composition is skewed to low complexity. Residues 278–385 (CASAISIPVT…TTATESGAWR (108 aa)) enclose the CBM20 domain. An N-linked (GlcNAc...) asparagine glycan is attached at N364.

It belongs to the polysaccharide monooxygenase AA13 family. The cofactor is Cu(2+). In terms of processing, the catalytically essential N-terminal histidine His-19 is post-translationally modified by methylation to prevent protonation of the histidine side chain, and protect the critical active site of the enzyme from oxidative damage.

The protein localises to the secreted. It catalyses the reaction starch + reduced acceptor + O2 = D-glucono-1,5-lactone-terminated malto-oligosaccharides + short-chain malto-oligosaccharides + acceptor + H2O.. Functionally, starch-active polysaccharide monooxygenase that oxidizes the C1 position of starch substrates, but not in cellulose, chitin, polygalacturonan or esterified pectin, nor with Arabidopsis stem cell walls. Catalysis by LPMOs requires the reduction of the active-site copper from Cu(II) to Cu(I) by a reducing agent and H(2)O(2) or O(2) as a cosubstrate. This Emericella nidulans (strain FGSC A4 / ATCC 38163 / CBS 112.46 / NRRL 194 / M139) (Aspergillus nidulans) protein is AA13 family lytic polysaccharide monooxygenase aasA.